A 434-amino-acid chain; its full sequence is Trigger factor (434 aa).

The PPIase FKBP-type domain occupies 160–245; it reads GDKVKMNFVG…LTEVQAANLP (86 aa).

This sequence belongs to the FKBP-type PPIase family. Tig subfamily.

Its subcellular location is the cytoplasm. The enzyme catalyses [protein]-peptidylproline (omega=180) = [protein]-peptidylproline (omega=0). Its function is as follows. Involved in protein export. Acts as a chaperone by maintaining the newly synthesized protein in an open conformation. Functions as a peptidyl-prolyl cis-trans isomerase. The sequence is that of Trigger factor from Shewanella putrefaciens (strain CN-32 / ATCC BAA-453).